A 134-amino-acid polypeptide reads, in one-letter code: Ribonuclease P protein component (134 aa).

This sequence belongs to the RnpA family. Consists of a catalytic RNA component (M1 or rnpB) and a protein subunit.

The catalysed reaction is Endonucleolytic cleavage of RNA, removing 5'-extranucleotides from tRNA precursor.. RNaseP catalyzes the removal of the 5'-leader sequence from pre-tRNA to produce the mature 5'-terminus. It can also cleave other RNA substrates such as 4.5S RNA. The protein component plays an auxiliary but essential role in vivo by binding to the 5'-leader sequence and broadening the substrate specificity of the ribozyme. This chain is Ribonuclease P protein component, found in Pseudomonas putida (strain GB-1).